The following is a 268-amino-acid chain: Ribosomal RNA small subunit methyltransferase A (268 aa).

Residues N16, L18, G43, E64, D89, and N110 each contribute to the S-adenosyl-L-methionine site.

This sequence belongs to the class I-like SAM-binding methyltransferase superfamily. rRNA adenine N(6)-methyltransferase family. RsmA subfamily.

It localises to the cytoplasm. The catalysed reaction is adenosine(1518)/adenosine(1519) in 16S rRNA + 4 S-adenosyl-L-methionine = N(6)-dimethyladenosine(1518)/N(6)-dimethyladenosine(1519) in 16S rRNA + 4 S-adenosyl-L-homocysteine + 4 H(+). In terms of biological role, specifically dimethylates two adjacent adenosines (A1518 and A1519) in the loop of a conserved hairpin near the 3'-end of 16S rRNA in the 30S particle. May play a critical role in biogenesis of 30S subunits. The sequence is that of Ribosomal RNA small subunit methyltransferase A from Pseudomonas aeruginosa (strain ATCC 15692 / DSM 22644 / CIP 104116 / JCM 14847 / LMG 12228 / 1C / PRS 101 / PAO1).